Reading from the N-terminus, the 719-residue chain is DNA replication licensing factor MCM7 (719 aa).

A2 is modified (N-acetylalanine). Glycyl lysine isopeptide (Lys-Gly) (interchain with G-Cter in SUMO2) cross-links involve residues K15 and K28. A phosphoserine mark is found at S121 and S314. The MCM domain maps to 332 to 538; that stretch reads FYEKLAASIA…NDLRLAQHIT (207 aa). Y345 is a binding site for ATP. S365 carries the phosphoserine modification. Positions 384, 386, 387, 388, and 489 each coordinate ATP. A Phosphoserine modification is found at S500. Positions 513-516 match the Arginine finger motif; sequence SRFD. Residue R514 coordinates ATP. The interaction with RAD17 stretch occupies residues 521-564; it reads IQDRPDRDNDLRLAQHITYVHQHSRQPPSQFEPLDMKLMRRYIA. Positions 577-719 are interaction with ATRIP; the sequence is LADYITAAYV…NASRTRITFV (143 aa). R604 contacts ATP. S678 carries the post-translational modification Phosphoserine.

The protein belongs to the MCM family. Component of the MCM2-7 complex. The complex forms a toroidal hexameric ring with the proposed subunit order MCM2-MCM6-MCM4-MCM7-MCM3-MCM5. Component of the CMG helicase complex, a hexameric ring of related MCM2-7 subunits stabilized by CDC45 and the tetrameric GINS complex. Interacts with the ATR-ATRIP complex and with RAD17. Interacts with TIPIN. Interacts with MCMBP. Interacts with ANKRD17. Component of the replisome complex composed of at least DONSON, MCM2, MCM7, PCNA and TICRR. In terms of processing, O-glycosylated (O-GlcNAcylated), in a cell cycle-dependent manner. Post-translationally, ubiquitinated by ECS(LRR1) E3 ubiquitin-protein ligase complex when forks converge following formation of DNA interstrand cross-links. During mitosis, ubiquitinated by TRAIP when forks converge following formation of DNA interstrand cross-links. Short ubiquitin chains on MCM7 promote recruitment of DNA glycosylase NEIL3. If the interstrand cross-link cannot be cleaved by NEIL3, the ubiquitin chains continue to grow on MCM7, promoting the unloading of the CMG helicase complex by the VCP/p97 ATPase.

The protein localises to the nucleus. The protein resides in the chromosome. The enzyme catalyses ATP + H2O = ADP + phosphate + H(+). Acts as a component of the MCM2-7 complex (MCM complex) which is the replicative helicase essential for 'once per cell cycle' DNA replication initiation and elongation in eukaryotic cells. Core component of CDC45-MCM-GINS (CMG) helicase, the molecular machine that unwinds template DNA during replication, and around which the replisome is built. The active ATPase sites in the MCM2-7 ring are formed through the interaction surfaces of two neighboring subunits such that a critical structure of a conserved arginine finger motif is provided in trans relative to the ATP-binding site of the Walker A box of the adjacent subunit. The six ATPase active sites, however, are likely to contribute differentially to the complex helicase activity. Required for S-phase checkpoint activation upon UV-induced damage. The protein is DNA replication licensing factor MCM7 of Homo sapiens (Human).